A 267-amino-acid polypeptide reads, in one-letter code: 2-oxoglutarate synthase subunit KorB (267 aa).

In terms of assembly, heterotetramer of the KorA, KorB, KorC and KorD subunits.

It catalyses the reaction 2 oxidized [2Fe-2S]-[ferredoxin] + 2-oxoglutarate + CoA = succinyl-CoA + 2 reduced [2Fe-2S]-[ferredoxin] + CO2 + H(+). The protein is 2-oxoglutarate synthase subunit KorB (korB) of Archaeoglobus fulgidus (strain ATCC 49558 / DSM 4304 / JCM 9628 / NBRC 100126 / VC-16).